A 172-amino-acid chain; its full sequence is 3-hydroxydecanoyl-[acyl-carrier-protein] dehydratase (172 aa).

Histidine 70 is an active-site residue.

This sequence belongs to the thioester dehydratase family. FabA subfamily. As to quaternary structure, homodimer.

It is found in the cytoplasm. It catalyses the reaction a (3R)-hydroxyacyl-[ACP] = a (2E)-enoyl-[ACP] + H2O. The catalysed reaction is (3R)-hydroxydecanoyl-[ACP] = (2E)-decenoyl-[ACP] + H2O. It carries out the reaction (2E)-decenoyl-[ACP] = (3Z)-decenoyl-[ACP]. It functions in the pathway lipid metabolism; fatty acid biosynthesis. In terms of biological role, necessary for the introduction of cis unsaturation into fatty acids. Catalyzes the dehydration of (3R)-3-hydroxydecanoyl-ACP to E-(2)-decenoyl-ACP and then its isomerization to Z-(3)-decenoyl-ACP. Can catalyze the dehydratase reaction for beta-hydroxyacyl-ACPs with saturated chain lengths up to 16:0, being most active on intermediate chain length. The protein is 3-hydroxydecanoyl-[acyl-carrier-protein] dehydratase of Xylella fastidiosa (strain M23).